A 2089-amino-acid polypeptide reads, in one-letter code: Rho GTPase-activating protein 32 (2089 aa).

The disordered stretch occupies residues 24 to 52; that stretch reads TQLTDGDEEEREESFRKMKSSIHSEEDDF. One can recognise a PX; atypical domain in the interval 131-245; it reads GSIQLSLSEE…LTWMEIDNKG (115 aa). The SH3 domain maps to 259–321; the sequence is PAVGAAHVIK…PGHCVELINQ (63 aa). Residues 372 to 567 form the Rho-GAP domain; sequence CDLGEHLLNS…FILNHVDVLF (196 aa). Phosphoserine occurs at positions 706, 709, 732, and 738. Basic and acidic residues predominate over residues 828–837; that stretch reads KLSPSKKDAE. The disordered stretch occupies residues 828-858; the sequence is KLSPSKKDAEAGGSQSQTPGSTASSEPVSPV. The segment covering 840–854 has biased composition (polar residues); sequence GSQSQTPGSTASSEP. A phosphoserine mark is found at S852, S856, S892, and S952. 3 disordered regions span residues 955-1037, 1119-1141, and 1154-1197; these read QLQL…PPPP, CNQP…TDSG, and LHRN…SVST. Composition is skewed to polar residues over residues 998–1014 and 1132–1141; these read LSSQ…QTGA and PTQSNTTDSG. Residues 1175 to 1191 are compositionally biased toward basic and acidic residues; that stretch reads DSEKSDDHGSFPEDHAG. The residue at position 1206 (S1206) is a Phosphoserine. The segment at 1221–1368 is disordered; it reads GTSVDKPHHS…GDPAPIFLSD (148 aa). Positions 1225 to 1235 are enriched in basic and acidic residues; the sequence is DKPHHSSELTD. The span at 1262–1275 shows a compositional bias: low complexity; the sequence is TATMAYMMATPARA. Residues 1395–1714 form an interaction with GAB2 region; it reads RAPPLHLRAE…YNYAGLPPRP (320 aa). Asymmetric dimethylarginine is present on residues R1526 and R1536. S1588 bears the Phosphoserine mark. Residues 1688–2089 are interaction with FYN; the sequence is SSRDFAFYNP…PHPDTQIHAE (402 aa). 2 disordered regions span residues 1801-1865 and 1881-2002; these read PGKT…QSSL and RAHQ…LERD. Residues 1826-1841 are compositionally biased toward basic and acidic residues; sequence GDERFYRKHPESEFDR. The segment covering 1850–1865 has biased composition (polar residues); sequence STQAEKPSLPQKQSSL. Positions 1881-1892 are enriched in basic and acidic residues; sequence RAHQEASHRQLC. A compositionally biased stretch (polar residues) spans 1918–1939; that stretch reads SEPSNYHNSGKYMTSGQGSLTL. Composition is skewed to basic and acidic residues over residues 1940–1954 and 1961–1975; these read NHKE…DRPR and PEKH…EEHF. Position 2039 is an omega-N-methylarginine (R2039).

The protein belongs to the PX domain-containing GAP family. In terms of assembly, interacts with NTRK1 (via cytoplasmic domain); the interaction is independent of the phosphorylation state of NTRK1. Interacts with SHC3 (via SH2 domain). Interacts with RASA1 (via SH3 domain); the interaction is necessary for the Ras activation and cell transforming activities of ARHGAP32. Interacts with GAB1 and GAB2. Interacts with CRK and CRKL. Found in a complex with CRKL and BCAR1; upon EGF stimulation BCAR1 may be replaced by EGFR. Interacts with NCK1 (via SH3 domain); NCK1 recruits phosphorylated BCAR1 to the complex. Isoform 2 interacts with FYN; the interaction appears to be dependent on tyrosine phosphorylation of ARHGAP32. Interacts with EGFR; the interaction requires EGF stimulation and is increased by SHC3. Interacts with CDC42; the interaction requires constitutively active CDC42. Interacts with CTNNB1, DLG4, CDH2 and GRIN2B. Interacts with GPHN. Isoform 2 is phosphorylated on multiple tyrosine residues by FYN. Phosphorylated tyrosine residues undergo dephosphorylation after stimulation of NMDA receptors. Phosphorylated in vitro by CaMK2 in the presence of calmodulin and calcium; which inhibits GAP activity. Isoform 1 and isoform 2 are highly expressed in brain, specially in cortex, corpus striatum, hippocampus and thalamus. Low levels in cerebellum, colon, small intestine, and kidney.

The protein localises to the postsynaptic density. The protein resides in the cell projection. It is found in the dendritic spine. Its subcellular location is the cytoplasm. It localises to the cell cortex. The protein localises to the endosome membrane. The protein resides in the golgi apparatus membrane. It is found in the endoplasmic reticulum membrane. Its subcellular location is the membrane. Functionally, GTPase-activating protein (GAP) promoting GTP hydrolysis on RHOA, CDC42 and RAC1 small GTPases. May be involved in the differentiation of neuronal cells during the formation of neurite extensions. Involved in NMDA receptor activity-dependent actin reorganization in dendritic spines. May mediate cross-talks between Ras- and Rho-regulated signaling pathways in cell growth regulation. Isoform 2 has higher GAP activity. The polypeptide is Rho GTPase-activating protein 32 (Arhgap32) (Mus musculus (Mouse)).